We begin with the raw amino-acid sequence, 180 residues long: Translation initiation factor IF-3 (180 aa).

It belongs to the IF-3 family. Monomer.

It is found in the cytoplasm. IF-3 binds to the 30S ribosomal subunit and shifts the equilibrium between 70S ribosomes and their 50S and 30S subunits in favor of the free subunits, thus enhancing the availability of 30S subunits on which protein synthesis initiation begins. This is Translation initiation factor IF-3 from Salmonella typhi.